We begin with the raw amino-acid sequence, 324 residues long: Glutathione synthetase (324 aa).

The 186-residue stretch at 124 to 309 (KLAIAQFREF…VAGMFIDALE (186 aa)) folds into the ATP-grasp domain. 150-206 (HAEQGDVIFKPLDGMGGAGIFRVGADGMNLGSVIETLTHNGTRTVMAQQYIPAIRDG) lines the ATP pocket. Mg(2+) contacts are provided by Glu280 and Asn282.

Belongs to the prokaryotic GSH synthase family. Requires Mg(2+) as cofactor. The cofactor is Mn(2+).

The catalysed reaction is gamma-L-glutamyl-L-cysteine + glycine + ATP = glutathione + ADP + phosphate + H(+). It participates in sulfur metabolism; glutathione biosynthesis; glutathione from L-cysteine and L-glutamate: step 2/2. The polypeptide is Glutathione synthetase (Ralstonia nicotianae (strain ATCC BAA-1114 / GMI1000) (Ralstonia solanacearum)).